The sequence spans 90 residues: UPF0237 protein MK1213 (90 aa).

Residues 5-79 (VVTVIGADRP…EELGVDVIVQ (75 aa)) enclose the ACT domain.

The protein belongs to the UPF0237 family.

In Methanopyrus kandleri (strain AV19 / DSM 6324 / JCM 9639 / NBRC 100938), this protein is UPF0237 protein MK1213.